A 265-amino-acid polypeptide reads, in one-letter code: 3-methyl-2-oxobutanoate hydroxymethyltransferase (265 aa).

Mg(2+)-binding residues include Asp43 and Asp82. Residues 43–44 (DS), Asp82, and Lys111 each bind 3-methyl-2-oxobutanoate. A Mg(2+)-binding site is contributed by Glu113. The active-site Proton acceptor is the Glu180.

Belongs to the PanB family. As to quaternary structure, homodecamer; pentamer of dimers. Requires Mg(2+) as cofactor.

The protein resides in the cytoplasm. The enzyme catalyses 3-methyl-2-oxobutanoate + (6R)-5,10-methylene-5,6,7,8-tetrahydrofolate + H2O = 2-dehydropantoate + (6S)-5,6,7,8-tetrahydrofolate. The protein operates within cofactor biosynthesis; (R)-pantothenate biosynthesis; (R)-pantoate from 3-methyl-2-oxobutanoate: step 1/2. In terms of biological role, catalyzes the reversible reaction in which hydroxymethyl group from 5,10-methylenetetrahydrofolate is transferred onto alpha-ketoisovalerate to form ketopantoate. The chain is 3-methyl-2-oxobutanoate hydroxymethyltransferase from Francisella tularensis subsp. mediasiatica (strain FSC147).